The chain runs to 127 residues: Probable 4-amino-4-deoxy-L-arabinose-phosphoundecaprenol flippase subunit ArnF (127 aa).

A helical membrane pass occupies residues 1-21 (MMGYFWALMSVLLVSGAQLMM). Over 22–48 (KWAMVSLPPVGQTDALMSAFMSVTPGA) the chain is Periplasmic. A helical transmembrane segment spans residues 49 to 69 (VALVIGLFAYVFSMGCWYMAL). Topologically, residues 70–77 (RRIALSKA) are cytoplasmic. Residues 78–98 (YPLLSLSYVLVWAAAIGLPWL) traverse the membrane as a helical segment. At 99–101 (HEP) the chain is on the periplasmic side. The chain crosses the membrane as a helical span at residues 102 to 122 (FSVGKLAGVSVIFVGLLLVCL). Residues 123–127 (PDKKS) are Cytoplasmic-facing.

Belongs to the ArnF family. In terms of assembly, heterodimer of ArnE and ArnF.

The protein resides in the cell inner membrane. The protein operates within bacterial outer membrane biogenesis; lipopolysaccharide biosynthesis. Its function is as follows. Translocates 4-amino-4-deoxy-L-arabinose-phosphoundecaprenol (alpha-L-Ara4N-phosphoundecaprenol) from the cytoplasmic to the periplasmic side of the inner membrane. This Enterobacter sp. (strain 638) protein is Probable 4-amino-4-deoxy-L-arabinose-phosphoundecaprenol flippase subunit ArnF.